The following is a 294-amino-acid chain: Acetylglutamate kinase (294 aa).

Substrate contacts are provided by residues 63–64 (GG), Arg85, and Asn188.

Belongs to the acetylglutamate kinase family. ArgB subfamily.

The protein localises to the cytoplasm. The catalysed reaction is N-acetyl-L-glutamate + ATP = N-acetyl-L-glutamyl 5-phosphate + ADP. It participates in amino-acid biosynthesis; L-arginine biosynthesis; N(2)-acetyl-L-ornithine from L-glutamate: step 2/4. In terms of biological role, catalyzes the ATP-dependent phosphorylation of N-acetyl-L-glutamate. The polypeptide is Acetylglutamate kinase (Methanococcus maripaludis (strain C7 / ATCC BAA-1331)).